The chain runs to 414 residues: Carboxynorspermidine synthase (414 aa).

It belongs to the saccharopine dehydrogenase family. Carboxynorspermidine synthase subfamily.

It carries out the reaction carboxynorspermidine + NADP(+) + H2O = L-aspartate 4-semialdehyde + propane-1,3-diamine + NADPH + H(+). The catalysed reaction is carboxyspermidine + NADP(+) + H2O = L-aspartate 4-semialdehyde + putrescine + NADPH + H(+). Functionally, involved in norspermidine biosynthesis. Catalyzes the synthesis of carboxynorspermidine from L-aspartate 4-semialdehyde and 1,3-diaminopropane. Is also active with putrescine as a substrate. Essential for biofilm formation. This Vibrio cholerae serotype O1 (strain ATCC 39315 / El Tor Inaba N16961) protein is Carboxynorspermidine synthase.